We begin with the raw amino-acid sequence, 595 residues long: Phosphomethylpyrimidine synthase (595 aa).

Over residues 97–120 the composition is skewed to basic and acidic residues; it reads GRDVRPEDNGFTKDDDPRAAREVF. The segment at 97–134 is disordered; the sequence is GRDVRPEDNGFTKDDDPRAAREVFPRTSSHKPLRAKKG. Over residues 124–133 the composition is skewed to basic residues; it reads SSHKPLRAKK. Substrate contacts are provided by residues Asn-202, Met-231, Tyr-260, His-296, 316-318, 357-360, and Glu-396; these read SRG and DGLR. His-400 is a binding site for Zn(2+). Tyr-423 contributes to the substrate binding site. His-464 contacts Zn(2+). Residues Cys-544, Cys-547, and Cys-552 each contribute to the [4Fe-4S] cluster site.

The protein belongs to the ThiC family. Requires [4Fe-4S] cluster as cofactor.

The catalysed reaction is 5-amino-1-(5-phospho-beta-D-ribosyl)imidazole + S-adenosyl-L-methionine = 4-amino-2-methyl-5-(phosphooxymethyl)pyrimidine + CO + 5'-deoxyadenosine + formate + L-methionine + 3 H(+). Its pathway is cofactor biosynthesis; thiamine diphosphate biosynthesis. In terms of biological role, catalyzes the synthesis of the hydroxymethylpyrimidine phosphate (HMP-P) moiety of thiamine from aminoimidazole ribotide (AIR) in a radical S-adenosyl-L-methionine (SAM)-dependent reaction. The protein is Phosphomethylpyrimidine synthase of Halalkalibacterium halodurans (strain ATCC BAA-125 / DSM 18197 / FERM 7344 / JCM 9153 / C-125) (Bacillus halodurans).